The chain runs to 343 residues: MQQASPTAIARILDANLNRAREGLRTVEEWCRFALENRELAEECKQLRQALAPWHQDDLRAARDTPNDVGTQLTHAQEALRTDVRALLQANLCRVEEALRVLEEYGKLRDPAMGACCKQLRYRVYALESGLLGSKLVQRLQQCSLYLVTSPQENLLATVEAALQGGLKLVQYRDKDAEDQLRWQRAKDLRELCRQYEALFLVNDRVDLALAVDADGVHLGQQDLPIAVARQLLGPDKIIGRSTTNPEEMAKAIAEGADYIGVGPVYATPTKAGKKPAGLEYVQYAVTNSPVPWFAIGGIDGENLGEVMEAGATQVAIVRAIMETTNPTQATAQLLTQLSRINP.

The interval 1 to 123 is unknown; that stretch reads MQQASPTAIA…GACCKQLRYR (123 aa). Positions 124–343 are thiamine-phosphate synthase; it reads VYALESGLLG…LLTQLSRINP (220 aa). 4-amino-2-methyl-5-(diphosphooxymethyl)pyrimidine-binding positions include 171 to 175 and N203; that span reads QYRDK. Residues D204 and D223 each coordinate Mg(2+). A 4-amino-2-methyl-5-(diphosphooxymethyl)pyrimidine-binding site is contributed by S242. Position 268-270 (268-270) interacts with 2-[(2R,5Z)-2-carboxy-4-methylthiazol-5(2H)-ylidene]ethyl phosphate; it reads TPT. Position 271 (K271) interacts with 4-amino-2-methyl-5-(diphosphooxymethyl)pyrimidine. A 2-[(2R,5Z)-2-carboxy-4-methylthiazol-5(2H)-ylidene]ethyl phosphate-binding site is contributed by G298.

It belongs to the thiamine-phosphate synthase family. It depends on Mg(2+) as a cofactor.

The catalysed reaction is 2-[(2R,5Z)-2-carboxy-4-methylthiazol-5(2H)-ylidene]ethyl phosphate + 4-amino-2-methyl-5-(diphosphooxymethyl)pyrimidine + 2 H(+) = thiamine phosphate + CO2 + diphosphate. It carries out the reaction 2-(2-carboxy-4-methylthiazol-5-yl)ethyl phosphate + 4-amino-2-methyl-5-(diphosphooxymethyl)pyrimidine + 2 H(+) = thiamine phosphate + CO2 + diphosphate. It catalyses the reaction 4-methyl-5-(2-phosphooxyethyl)-thiazole + 4-amino-2-methyl-5-(diphosphooxymethyl)pyrimidine + H(+) = thiamine phosphate + diphosphate. Its pathway is cofactor biosynthesis; thiamine diphosphate biosynthesis; thiamine phosphate from 4-amino-2-methyl-5-diphosphomethylpyrimidine and 4-methyl-5-(2-phosphoethyl)-thiazole: step 1/1. Its function is as follows. Condenses 4-methyl-5-(beta-hydroxyethyl)thiazole monophosphate (THZ-P) and 2-methyl-4-amino-5-hydroxymethyl pyrimidine pyrophosphate (HMP-PP) to form thiamine monophosphate (TMP). In Synechocystis sp. (strain ATCC 27184 / PCC 6803 / Kazusa), this protein is Thiamine-phosphate synthase.